We begin with the raw amino-acid sequence, 521 residues long: Cyclic AMP-responsive element-binding protein 3-like protein 2 (521 aa).

Residues 1-378 lie on the Cytoplasmic side of the membrane; it reads MEVLESGEQS…CKLAGTQTGT (378 aa). Over residues 83–103 the composition is skewed to polar residues; sequence YSLSEEPRTQSPFTHAATSDS. The segment at 83-106 is disordered; the sequence is YSLSEEPRTQSPFTHAATSDSFND. The residue at position 93 (Ser93) is a Phosphoserine. Residue Lys178 forms a Glycyl lysine isopeptide (Lys-Gly) (interchain with G-Cter in SUMO2) linkage. The residue at position 191 (Ser191) is a Phosphoserine. A disordered region spans residues 196–264; the sequence is SVDQLHLPPT…PHKLQGSGPL (69 aa). Over residues 208–220 the composition is skewed to low complexity; it reads SSHSSDSEGSLSP. Residues 294–357 enclose the bZIP domain; it reads ALKKIRRKIK…RTLLQQLQKL (64 aa). Residues 296-325 form a basic motif region; it reads KKIRRKIKNKISAQESRRKKKEYMDSLEKK. A leucine-zipper region spans residues 336-357; sequence LRKKVEVLENTNRTLLQQLQKL. A helical; Signal-anchor for type II membrane protein transmembrane segment spans residues 379 to 399; sequence CLMVVVLCFAVAFGSFFQGYG. Over 400–521 the chain is Lumenal; the sequence is PYPSATKMAL…ELERRVNATF (122 aa). The short motif at 427-430 is the S1P recognition element; the sequence is RNLL. N-linked (GlcNAc...) asparagine glycosylation is found at Asn481, Asn505, and Asn518.

Belongs to the bZIP family. ATF subfamily. In terms of assembly, binds DNA as a dimer. In terms of processing, upon ER stress, translocated to the Golgi apparatus, where it is processed by regulated intramembrane proteolysis (RIP) to release the cytosol-facing N-terminal transcription factor domain. The cleavage is performed sequentially by site-1 and site-2 proteases (S1P/MBTPS1 and S2P/MBTPS2). Post-translationally, N-glycosylated. Ubiquitinated by HRD1/SYVN1; undergoes 'Lys-48'-linked ubiquitination, followed by rapid proteasomal degradation under normal conditions. Upon ER stress, SYVN1 E3 ubiquitin-protein ligase dissociates from its substrate, ubiquitination does not occur and CREB3L2 is stabilized. Widely expressed, including in lung, bladder, ovary, testis and spleen. Highly expressed in chondrocytes.

The protein localises to the endoplasmic reticulum membrane. The protein resides in the nucleus. Its function is as follows. Transcription factor involved in unfolded protein response (UPR). In the absence of endoplasmic reticulum (ER) stress, inserted into ER membranes, with N-terminal DNA-binding and transcription activation domains oriented toward the cytosolic face of the membrane. In response to ER stress, transported to the Golgi, where it is cleaved in a site-specific manner by resident proteases S1P/MBTPS1 and S2P/MBTPS2. The released N-terminal cytosolic domain is translocated to the nucleus to effect transcription of specific target genes. Plays a critical role in chondrogenesis by activating the transcription of SEC23A, which promotes the transport and secretion of cartilage matrix proteins, and possibly that of ER biogenesis-related genes. In a neuroblastoma cell line, protects cells from ER stress-induced death. In vitro activates transcription of target genes via direct binding to the CRE site. The polypeptide is Cyclic AMP-responsive element-binding protein 3-like protein 2 (Creb3l2) (Mus musculus (Mouse)).